Reading from the N-terminus, the 217-residue chain is Phosphatidylcholine synthase (217 aa).

Residues Ala1–Leu8 traverse the membrane as a helical segment. Residues Val9–Tyr16 lie on the Periplasmic side of the membrane. Residues Ile17–Ala37 traverse the membrane as a helical segment. Topologically, residues Arg38 to Asp50 are cytoplasmic. The helical transmembrane segment at Gly51 to Leu71 threads the bilayer. The Periplasmic segment spans residues Leu72–Met77. Residues Leu78–Phe98 traverse the membrane as a helical segment. Over Cys99–Asp107 the chain is Cytoplasmic. Residues His108–Asn128 form a helical membrane-spanning segment. A topological domain (periplasmic) is located at residue Thr129. Residues Ser130–Val149 traverse the membrane as a helical segment. Over Lys150–Arg164 the chain is Cytoplasmic. A helical transmembrane segment spans residues Ile165–Leu185. At Ile186–Thr191 the chain is on the periplasmic side. Residues Asn192–Tyr212 form a helical membrane-spanning segment. Topologically, residues Arg213–Pro217 are cytoplasmic.

It belongs to the CDP-alcohol phosphatidyltransferase class-I family. Requires Mn(2+) as cofactor.

The protein resides in the cell inner membrane. The catalysed reaction is a CDP-1,2-diacyl-sn-glycerol + choline = a 1,2-diacyl-sn-glycero-3-phosphocholine + CMP + H(+). In terms of biological role, condenses choline with CDP-diglyceride to produce phosphatidylcholine and CMP. This is Phosphatidylcholine synthase from Legionella bozemanae (Fluoribacter bozemanae).